Reading from the N-terminus, the 190-residue chain is Capsid protein (190 aa).

Methionine 1 carries the N-acetylmethionine; by host modification.

The protein belongs to the tymoviruses capsid protein family.

It localises to the virion. Its function is as follows. Self-assembles to form a T=3 icosahedral capsid composed of 180 copies of the capsid protein. The capsid encapsulates the single-stranded RNA genome. This Atropa belladonna (Belladonna) protein is Capsid protein.